A 442-amino-acid chain; its full sequence is Tubulin beta chain (442 aa).

GTP contacts are provided by Gln-11, Glu-69, Ser-138, Gly-142, Thr-143, Gly-144, Asn-204, and Asn-226. Glu-69 contacts Mg(2+).

It belongs to the tubulin family. In terms of assembly, dimer of alpha and beta chains. A typical microtubule is a hollow water-filled tube with an outer diameter of 25 nm and an inner diameter of 15 nM. Alpha-beta heterodimers associate head-to-tail to form protofilaments running lengthwise along the microtubule wall with the beta-tubulin subunit facing the microtubule plus end conferring a structural polarity. Microtubules usually have 13 protofilaments but different protofilament numbers can be found in some organisms and specialized cells. The cofactor is Mg(2+).

The protein localises to the cytoplasm. It is found in the cytoskeleton. Functionally, tubulin is the major constituent of microtubules, a cylinder consisting of laterally associated linear protofilaments composed of alpha- and beta-tubulin heterodimers. Microtubules grow by the addition of GTP-tubulin dimers to the microtubule end, where a stabilizing cap forms. Below the cap, tubulin dimers are in GDP-bound state, owing to GTPase activity of alpha-tubulin. This is Tubulin beta chain (bPT2) from Paramecium tetraurelia.